A 352-amino-acid polypeptide reads, in one-letter code: MYQNKSLIFKNPPIGWPKPDVDFGVECRPIDINGDIPLGGVILKNCYVSLDPYQRGRMRAPTVDSYSPPFTIGDPMEGHVISRVIRSASTKLQPGDFVSGVGPIQEFSVLSAGVVDGFTRIENPYNLNLEIFLGPLGMPGLTAYSSFYEIGKPKKGETIFISAASGAVGQLVGQLAKREGLYVIGSVGDDEKVEFITKGLGFDVGFNYKKEVIGEALMRVAPEGIDIYFDNVGGQTLESALYAMRPRGRIVVSGMISQYNLQPSELYGVKNLFMVITNRITIQGFIVTDSDMGPKYSAEHLKNVSQWIYDGSLKPKIHVDTGMDHACQSFINMLKGRKIGKAVLQIADLNGD.

Residues 166-169 (GAVG), Lys-192, Tyr-208, Asn-231, and 285-287 (FIV) contribute to the NADP(+) site.

It belongs to the NADP-dependent oxidoreductase L4BD family.

The protein operates within mycotoxin biosynthesis. In terms of biological role, NADP-dependent oxidoreductase; part of the Tox1B locus, one of the 2 loci that mediate the biosynthesis of T-toxin, a family of linear polyketides 37 to 45 carbons in length, of which the major component is 41 carbons, and which leads to high virulence to maize. One of the PKSs (PKS1 or PKS2) could synthesize a precursor, used subsequently by the other PKS as starter unit, to add additional carbons. Variability in the length of the final carbon backbone C35-47 could be achieved by varying the number of condensation cycles, or use of different starter or extender units or might be due to decarboxylation of the penultimate product, catalyzed by DEC1. Additional proteins are required for the biosynthesis of T-toxin, including oxidoreductases RED1, RED2, RED3, LAM1 and OXI1, as well as esterase TOX9. This Cochliobolus heterostrophus (strain C4 / ATCC 48331 / race T) (Southern corn leaf blight fungus) protein is NADP-dependent oxidoreductase RED1.